The chain runs to 145 residues: Large ribosomal subunit protein bL19 (145 aa).

It belongs to the bacterial ribosomal protein bL19 family.

Functionally, this protein is located at the 30S-50S ribosomal subunit interface and may play a role in the structure and function of the aminoacyl-tRNA binding site. This Brachyspira hyodysenteriae (strain ATCC 49526 / WA1) protein is Large ribosomal subunit protein bL19.